The chain runs to 408 residues: CinA-like protein (408 aa).

Belongs to the CinA family.

This Fervidobacterium nodosum (strain ATCC 35602 / DSM 5306 / Rt17-B1) protein is CinA-like protein.